A 735-amino-acid polypeptide reads, in one-letter code: NAD(P)H-quinone oxidoreductase subunit 5, chloroplastic (735 aa).

16 helical membrane passes run 9–29, 40–60, 89–109, 125–145, 147–167, 184–204, 219–239, 258–278, 280–300, 327–347, 354–374, 396–416, 425–445, 540–560, 600–620, and 714–734; these read WIIPFVPLPIPILIGMGLLLF, WAFPNILLLSIVMIFSLDLSI, IDSLTSIMSILITTVGIFVLI, FAYMSLFNTSMLGLVTSCNLI, IYIFWELVGMCSYLLIGFWFT, IGDFGLLLGILGFYWITGSFE, NEVHFLFVTLCASLLFAGAVA, TPISALIHAATMVAAGIFLVA, LLPLFIVIPYIMNLISLIGII, LGYMMLALGMGSYRAALFHLI, ALLFLASGSIIHSMEAIVGYS, IAFLVGTLSLCGIPPLACFWS, WLYSPIFAIIAWSTAGLTAFY, LFPMLILLLFTLFVGAIAIPF, FSVSIACFGIFTAFLLYKPFY, and FYLLLYLVYVFIFLVISYFIL.

The protein belongs to the complex I subunit 5 family. In terms of assembly, NDH is composed of at least 16 different subunits, 5 of which are encoded in the nucleus.

Its subcellular location is the plastid. It is found in the chloroplast thylakoid membrane. The catalysed reaction is a plastoquinone + NADH + (n+1) H(+)(in) = a plastoquinol + NAD(+) + n H(+)(out). It carries out the reaction a plastoquinone + NADPH + (n+1) H(+)(in) = a plastoquinol + NADP(+) + n H(+)(out). In terms of biological role, NDH shuttles electrons from NAD(P)H:plastoquinone, via FMN and iron-sulfur (Fe-S) centers, to quinones in the photosynthetic chain and possibly in a chloroplast respiratory chain. The immediate electron acceptor for the enzyme in this species is believed to be plastoquinone. Couples the redox reaction to proton translocation, and thus conserves the redox energy in a proton gradient. The protein is NAD(P)H-quinone oxidoreductase subunit 5, chloroplastic (ndhF) of Gossypium hirsutum (Upland cotton).